A 341-amino-acid chain; its full sequence is Inositol monophosphatase 3 (341 aa).

The chain crosses the membrane as a helical span at residues 11–31; it reads LGIAVFCLLGVGVIYHLYAGV. Residues Glu117, Asp157, Leu159, Asp160, and Asp283 each contribute to the Mg(2+) site. Glu117 serves as a coordination point for substrate. Substrate is bound by residues 159 to 162 and Asp283; that span reads LDAT.

This sequence belongs to the inositol monophosphatase superfamily. The cofactor is Mg(2+).

The protein localises to the membrane. The enzyme catalyses a myo-inositol phosphate + H2O = myo-inositol + phosphate. The protein operates within polyol metabolism; myo-inositol biosynthesis; myo-inositol from D-glucose 6-phosphate: step 2/2. The chain is Inositol monophosphatase 3 (bpnt2) from Danio rerio (Zebrafish).